Reading from the N-terminus, the 283-residue chain is 4-diphosphocytidyl-2-C-methyl-D-erythritol kinase (283 aa).

Lysine 10 is a catalytic residue. ATP is bound at residue 99-109; that stretch reads PMGGGLGGGSS. Residue aspartate 141 is part of the active site.

This sequence belongs to the GHMP kinase family. IspE subfamily. Homodimer.

It carries out the reaction 4-CDP-2-C-methyl-D-erythritol + ATP = 4-CDP-2-C-methyl-D-erythritol 2-phosphate + ADP + H(+). It functions in the pathway isoprenoid biosynthesis; isopentenyl diphosphate biosynthesis via DXP pathway; isopentenyl diphosphate from 1-deoxy-D-xylulose 5-phosphate: step 3/6. Catalyzes the phosphorylation of the position 2 hydroxy group of 4-diphosphocytidyl-2C-methyl-D-erythritol. The polypeptide is 4-diphosphocytidyl-2-C-methyl-D-erythritol kinase (Salmonella typhi).